The following is a 1132-amino-acid chain: Serine/threonine-protein kinase spk-1 (1132 aa).

Residues 75–95 (GGSLILTDIFPTVLFMFVVLF) form a helical membrane-spanning segment. Disordered regions lie at residues 240 to 388 (NEDQ…DSDD) and 419 to 481 (NKKA…KRGG). Composition is skewed to acidic residues over residues 281–290 (SEDEDVESQE) and 311–336 (DEPI…LGDE). Residues 362–372 (DSSVSSSTSST) show a composition bias toward low complexity. A compositionally biased stretch (acidic residues) spans 373-388 (PDDDEDDSATSYDSDD). Residues 421–433 (KAEVNANEERMDD) are compositionally biased toward basic and acidic residues. The span at 434-443 (VSVSPGRSDS) shows a compositional bias: low complexity. In terms of domain architecture, Protein kinase spans 495–1044 (YHVIRKLGWG…ANDALKHPFL (550 aa)). ATP is bound by residues 501–509 (LGWGHFSTV) and Lys524. Asp628 acts as the Proton acceptor in catalysis. A disordered region spans residues 1066 to 1121 (QVPEALDGNQEVYRDENDSNSASERSANRSAGSDDEEEFHMDRPGPSGVINEPADV). Over residues 1084-1096 (SNSASERSANRSA) the composition is skewed to low complexity.

This sequence belongs to the protein kinase superfamily. Ser/Thr protein kinase family.

It localises to the membrane. It carries out the reaction L-seryl-[protein] + ATP = O-phospho-L-seryl-[protein] + ADP + H(+). The enzyme catalyses L-threonyl-[protein] + ATP = O-phospho-L-threonyl-[protein] + ADP + H(+). Its function is as follows. Required for embryogenesis and germline development in both adult hermaphrodites and males. SR-protein kinase (SRPK) that binds directly to and phosphorylates RS domains. In Caenorhabditis briggsae, this protein is Serine/threonine-protein kinase spk-1 (spk-1).